Reading from the N-terminus, the 306-residue chain is UDP-3-O-acyl-N-acetylglucosamine deacetylase (306 aa).

The Zn(2+) site is built by H79, H238, and D242. The active-site Proton donor is the H265.

It belongs to the LpxC family. Zn(2+) serves as cofactor.

The enzyme catalyses a UDP-3-O-[(3R)-3-hydroxyacyl]-N-acetyl-alpha-D-glucosamine + H2O = a UDP-3-O-[(3R)-3-hydroxyacyl]-alpha-D-glucosamine + acetate. The protein operates within glycolipid biosynthesis; lipid IV(A) biosynthesis; lipid IV(A) from (3R)-3-hydroxytetradecanoyl-[acyl-carrier-protein] and UDP-N-acetyl-alpha-D-glucosamine: step 2/6. Catalyzes the hydrolysis of UDP-3-O-myristoyl-N-acetylglucosamine to form UDP-3-O-myristoylglucosamine and acetate, the committed step in lipid A biosynthesis. The protein is UDP-3-O-acyl-N-acetylglucosamine deacetylase of Shewanella violacea (strain JCM 10179 / CIP 106290 / LMG 19151 / DSS12).